The sequence spans 368 residues: MAANDRPDRSDRGADERLRATLAAIAPGTQMRDALERILRGNTGALIVLGYDKTVESICSGGFNLDVELSAPLMRELAKMDGAIILDEKATRIIKANVHLQPDPSIPTNESGTRHRSAERTARQTGFPVISVSQSMRIIALYVDGRRHVLDEPSAILSRANQALATLERYKLRLDEVSGTLSALEIEDLVTVRDAAVVAQRLEMVRRIADEIQGYVVELGTDGRLLSLQLDELLAGVEPERDLIVRDYLPAAAGKRGRSVDDVLRDLDALTPEELLDLGTVARVIGCGGTENLDNPVSPRGYRLLAKIPRLPCAVIERLVEHFGTLQKLLAASVDDLQAVEGVGESRARSVREGLSRLAESSILERYV.

The DAC domain maps to 15–153 (DERLRATLAA…DGRRHVLDEP (139 aa)). Residues G82, L100, and 113–117 (TRHRS) contribute to the ATP site. The segment at 101 to 121 (QPDPSIPTNESGTRHRSAERT) is disordered. The span at 112-121 (GTRHRSAERT) shows a compositional bias: basic and acidic residues.

It belongs to the DisA family. As to quaternary structure, homooctamer. Mg(2+) serves as cofactor.

The enzyme catalyses 2 ATP = 3',3'-c-di-AMP + 2 diphosphate. Its function is as follows. Participates in a DNA-damage check-point. DisA forms globular foci that rapidly scan along the chromosomes searching for lesions. In terms of biological role, also has diadenylate cyclase activity, catalyzing the condensation of 2 ATP molecules into cyclic di-AMP (c-di-AMP). c-di-AMP likely acts as a signaling molecule that may couple DNA integrity with a cellular process. This Acidothermus cellulolyticus (strain ATCC 43068 / DSM 8971 / 11B) protein is DNA integrity scanning protein DisA.